The following is a 123-amino-acid chain: Large ribosomal subunit protein bL12 (123 aa).

It belongs to the bacterial ribosomal protein bL12 family. In terms of assembly, homodimer. Part of the ribosomal stalk of the 50S ribosomal subunit. Forms a multimeric L10(L12)X complex, where L10 forms an elongated spine to which 2 to 4 L12 dimers bind in a sequential fashion. Binds GTP-bound translation factors.

In terms of biological role, forms part of the ribosomal stalk which helps the ribosome interact with GTP-bound translation factors. Is thus essential for accurate translation. The polypeptide is Large ribosomal subunit protein bL12 (Salmonella arizonae (strain ATCC BAA-731 / CDC346-86 / RSK2980)).